The chain runs to 1146 residues: MNIFYIFLFLLSFVQGLEHTHRRGSLVKRAVCYDTDQVPLNIFFGYNRADKTDSNKNMALNIFNVFRGFLAGEGGESFYNSNGNVYGFMWVGSMVHNRGFKDNILPIMENEVKNYGIPKTLYLEYDGGGDPMKSFGIILDTTSRDTVVKAAKLWSQGKKLNSYEGSKNYQATACYLSYAYRKPIVNDNFVGTCDYFTLESGKTPADQSGINGESLQGYNPNLDFSKLSAGQPICKTIGNPPNFKPSKNSDGSCKTYKVSSGESCSSIAVKYYPLSLNDIENYNKGNYGWKGCSSLQKDYNLCVSDGSAPRPVSNPIAECGPLAPGEKYNAKCPLNACCSEFGFCGLTKDYCDKKSSTTGAPGTDGCFSNCGYGSTSNVKSSTFKKIAYWLDAKDKLAMDPKNIPNGPYDILHYAFVNINSDFSIDDSAFSKSAFLKVTSSKKIPSFGGWDFSTSPSTYTIFRNAVKTDQNRNTFANNLINFMNKYNLDGIDLDWEYPGAPDIPDIPADDSSSGSNYLTFLKLLKGKMPSGKTLSIAIPSSYWYLKNFPISDIQNTVDYMVYMTYDIHGIWEYGKANSYINCHTPRKEIEDAIKMLDKAGVKFNKVFGGVANYGRSYKMVNTNCYNYGCGFQREGGNSRDMTNTPGVLSDSEIIDIDSSDKKNDRWVDTNTDCIFMKYDGNSVVSWPKSRYDLEDMFKNYGFAGTSLWAANYFKHDEWKNDEDDNNDDTEDPFDEENVYFDVYDCKNKAGYDLDNPVYGCRLETAINIIIWNGTESVNTVLNILNDYDNYIKYYEALTRAHYDSVMEKYEKWLFEEDGYYTYYTDVDGDDIIITPPDKKKRDYIQEKYSFEKEFMMSQNMTELTEIKVNKTINFMLNGTSLAVKEYNNEKVLYKRGDIPPPGSNNRLIRNSIILDKDKEAAIASFKQYSGIELSKDSFVQRDKDKKFDLNGKHYTFMHSTILNAIVLFPNVLTNIDSDYIHHISDLIEQAHNSLGNESPDNIYEVLESVVVFMSVSEIADYTYTEGKKIKEKYDKMKKTMIVGIILGIIGGLSLFLGPIGIATSVLADFALLGADAAINGELNPSDLAFALAGLFLPVFASLGKTFKFAEALQKININKSKNFDNLNEFEKIRFFRSKLGKVKMCGS.

Positions 1–17 are cleaved as a signal peptide; sequence MNIFYIFLFLLSFVQGL. The propeptide occupies 18-29; it reads EHTHRRGSLVKR. 2 LysM domains span residues 205–234 and 254–303; these read ADQSGINGESLQGYNPNLDFSKLSAGQPIC and KTYK…NLCV. In terms of domain architecture, Chitin-binding type-1 spans 316–372; sequence IAECGPLAPGEKYNAKCPLNACCSEFGFCGLTKDYCDKKSSTTGAPGTDGCFSNCGY. Cystine bridges form between cysteine 319/cysteine 338, cysteine 332/cysteine 344, cysteine 337/cysteine 351, and cysteine 366/cysteine 370. The 353-residue stretch at 383-735 folds into the GH18 domain; sequence FKKIAYWLDA…DDTEDPFDEE (353 aa). Chitin is bound by residues isoleucine 424 and 447–450; that span reads GGWD. Glutamate 495 serves as the catalytic Proton donor. Residues tyrosine 496, 562–565, and tryptophan 707 each bind chitin; that span reads MTYD. Asparagine 771, asparagine 858, asparagine 868, asparagine 876, and asparagine 1117 each carry an N-linked (GlcNAc...) asparagine glycan.

Belongs to the glycosyl hydrolase 18 family. The killer toxin is composed of three subunits: alpha, beta and gamma. In terms of processing, RF2 is potentially split by membrane-bound basic amino acid-specific peptidase to yield the alpha and beta subunits.

The enzyme catalyses Random endo-hydrolysis of N-acetyl-beta-D-glucosaminide (1-&gt;4)-beta-linkages in chitin and chitodextrins.. In terms of biological role, the alpha subunit is a potent exochitinase. Along with the beta subunit it plays a role in the initial interaction of the toxin with sensitive cells and allow the gamma subunit (the active toxin) to gain entry into the cell. The chain is Killer toxin subunits alpha/beta from Kluyveromyces lactis (strain ATCC 8585 / CBS 2359 / DSM 70799 / NBRC 1267 / NRRL Y-1140 / WM37) (Yeast).